The chain runs to 183 residues: Inosine/xanthosine triphosphatase (183 aa).

A Mg(2+)-binding site is contributed by Asp-75. 75–76 (DG) is a binding site for substrate.

It belongs to the YjjX NTPase family. Homodimer. Requires Mg(2+) as cofactor. The cofactor is Mn(2+).

It carries out the reaction XTP + H2O = XDP + phosphate + H(+). It catalyses the reaction ITP + H2O = IDP + phosphate + H(+). Phosphatase that hydrolyzes non-canonical purine nucleotides such as XTP and ITP to their respective diphosphate derivatives. Probably excludes non-canonical purines from DNA/RNA precursor pool, thus preventing their incorporation into DNA/RNA and avoiding chromosomal lesions. The chain is Inosine/xanthosine triphosphatase from Vibrio vulnificus (strain YJ016).